Here is a 442-residue protein sequence, read N- to C-terminus: GTPase Der (442 aa).

EngA-type G domains lie at 3–167 (PTIV…PADD) and 177–350 (PRVA…AAAM). GTP contacts are provided by residues 9 to 16 (GRPNVGKS), 56 to 60 (DTAGF), 119 to 122 (NKAE), 183 to 190 (GRPNVGKS), 230 to 234 (DTAGL), and 295 to 298 (NKWD). The region spanning 351–435 (SNLSTPRLTR…PLRIQFRTAH (85 aa)) is the KH-like domain.

Belongs to the TRAFAC class TrmE-Era-EngA-EngB-Septin-like GTPase superfamily. EngA (Der) GTPase family. In terms of assembly, associates with the 50S ribosomal subunit.

In terms of biological role, GTPase that plays an essential role in the late steps of ribosome biogenesis. The polypeptide is GTPase Der (Azoarcus sp. (strain BH72)).